The primary structure comprises 342 residues: Spore photoproduct lyase (342 aa).

The region spanning 77-305 (SKPSAEYAIP…EEKRRYKWGR (229 aa)) is the Radical SAM core domain. 3 residues coordinate [4Fe-4S] cluster: C91, C95, and C98. The segment at residues 218–235 (EAAVKVAKAGYPLGFIVA) is a DNA-binding region (H-T-H motif).

This sequence belongs to the radical SAM superfamily. SPL family. Monomer or homodimer. The cofactor is [4Fe-4S] cluster. It depends on S-adenosyl-L-methionine as a cofactor.

It catalyses the reaction (5R)-5,6-dihydro-5-(thymidin-7-yl)thymidine in DNA = a thymidine dimer in DNA. In terms of biological role, involved in repair of UV radiation-induced DNA damage during spore germination. Can repair thymine dimer 5-thyminyl-5,6-dihydrothymine (known as spore photoproduct (SP)) by in situ monomerization of SP to two thymines. This is Spore photoproduct lyase (splB) from Bacillus subtilis (strain 168).